A 463-amino-acid polypeptide reads, in one-letter code: Glutamate--tRNA ligase (463 aa).

The 'HIGH' region motif lies at 10–20; it reads PSPTGHLHIGG. The 'KMSKS' region signature appears at 236-240; it reads KLSKR. Position 239 (K239) interacts with ATP.

It belongs to the class-I aminoacyl-tRNA synthetase family. Glutamate--tRNA ligase type 1 subfamily. In terms of assembly, monomer.

The protein resides in the cytoplasm. The catalysed reaction is tRNA(Glu) + L-glutamate + ATP = L-glutamyl-tRNA(Glu) + AMP + diphosphate. In terms of biological role, catalyzes the attachment of glutamate to tRNA(Glu) in a two-step reaction: glutamate is first activated by ATP to form Glu-AMP and then transferred to the acceptor end of tRNA(Glu). This is Glutamate--tRNA ligase from Nitratidesulfovibrio vulgaris (strain DP4) (Desulfovibrio vulgaris).